Reading from the N-terminus, the 57-residue chain is MAKISITLKKSLIGRKKDHIATVNALGLKKIGRTVEHEDTPQIRGMIKKVDYLLEVK.

It belongs to the universal ribosomal protein uL30 family. Part of the 50S ribosomal subunit.

The sequence is that of Large ribosomal subunit protein uL30 from Clostridium acetobutylicum (strain ATCC 824 / DSM 792 / JCM 1419 / IAM 19013 / LMG 5710 / NBRC 13948 / NRRL B-527 / VKM B-1787 / 2291 / W).